Consider the following 287-residue polypeptide: POU domain class 2-associating factor 2 (287 aa).

Positions Lys-10–Arg-32 constitute an OCA domain. 3 disordered regions span residues Asp-24–Ile-51, Thr-161–Arg-199, and Pro-247–Gly-279. 2 stretches are compositionally biased toward polar residues: residues Gln-33 to Pro-49 and Leu-180 to Arg-199.

The protein belongs to the POU2AF family. Interacts with POU2F3 (via the POU domain) in a DNA-dependent manner; this interaction recruits POU2AF2 to chromatin and increases POU2F3 transactivation activity. Expressed in tuft cells of the small intestine, trachea, thymus, and colon.

It localises to the cytoplasm. The protein localises to the cytosol. Its subcellular location is the nucleus. Its function is as follows. Transcriptional coactivator of POU2F3. This complex drives the development of tuft cells, a rare chemosensory cells that coordinate immune and neural functions within mucosal epithelial tissues. The sequence is that of POU domain class 2-associating factor 2 from Mus musculus (Mouse).